The primary structure comprises 319 residues: MSKKTKQELENNKLSKRLRHAVGDTINDFNMIEPGDKIMVCLSGGKDSYALLDILRRLQASAPIDFELVAVNLDQKQPGFPEEVLPTYLESIGVPYKIVEEDTYSTVKRVLDEGKTTCSLCSRLRRGILYRTAKELGCTKIALGHHRDDILATMFLNMFYGGKLKAMPPKLVSDNGEHIVIRPLAYVKEKDLIKYAELKQFPIIPCNLCGSQPNLQRQVIGDMLRDWDKRFPGRIESMFSALQNVVPSHLADTELFDFAGLERGQNLKHGGDLAFDSEKMPERFSDGSEEDESEIKIEPQKAERKVINILANKPKTCGA.

The short motif at 43–48 (SGGKDS) is the PP-loop motif element. 3 residues coordinate [4Fe-4S] cluster: Cys-118, Cys-121, and Cys-209.

This sequence belongs to the TtcA family. In terms of assembly, homodimer. The cofactor is Mg(2+). [4Fe-4S] cluster is required as a cofactor.

The protein resides in the cytoplasm. The enzyme catalyses cytidine(32) in tRNA + S-sulfanyl-L-cysteinyl-[cysteine desulfurase] + AH2 + ATP = 2-thiocytidine(32) in tRNA + L-cysteinyl-[cysteine desulfurase] + A + AMP + diphosphate + H(+). It functions in the pathway tRNA modification. Functionally, catalyzes the ATP-dependent 2-thiolation of cytidine in position 32 of tRNA, to form 2-thiocytidine (s(2)C32). The sulfur atoms are provided by the cysteine/cysteine desulfurase (IscS) system. This Neisseria gonorrhoeae (strain NCCP11945) protein is tRNA-cytidine(32) 2-sulfurtransferase.